The sequence spans 429 residues: MFVDQVKIYVKAGNGGDGMVAFRREKFVPNGGPAGGDGGKGADVVFVVDEGLRTLVDFRFKRIFKAEHGEHGMSKSMHGRGAEDLVVKVPQGTIVKDIDTGEIIADLVAHGQRAVIAKAGRGGRGNKRFATPANPAPELSENGEPGQERNVQLELKVLADVGLVGFPSVGKSTLLSVVSAARPKIAAYHFTTIVPNLGMVDAGDGRSFVMADLPGLIEGASQGVGLGHQFLRHIERTRVIVHVIDMSGSEGRVPYEDYMAINNELEQYNLRLMERPQIIVANKMDMPDAEENLNEFKTKIAEDIPVFPISAVTKTGLRELLLAIADKLETTPEFPLNEILEQEDEDTVLYKYVADEPDFEISREPDGTFVLSGAKIERLFTMTNFERDASISRFARQLRAMGVDEALRKRGAKDGDIVRLLDYEFEFMD.

Residues 1–158 (MFVDQVKIYV…RNVQLELKVL (158 aa)) form the Obg domain. The interval 124–145 (RGNKRFATPANPAPELSENGEP) is disordered. Positions 159–329 (ADVGLVGFPS…LLLAIADKLE (171 aa)) constitute an OBG-type G domain. Residues 165 to 172 (GFPSVGKS), 190 to 194 (FTTIV), 212 to 215 (DLPG), 282 to 285 (NKMD), and 310 to 312 (SAV) contribute to the GTP site. Positions 172 and 192 each coordinate Mg(2+). Residues 351-429 (KYVADEPDFE…LLDYEFEFMD (79 aa)) form the OCT domain.

The protein belongs to the TRAFAC class OBG-HflX-like GTPase superfamily. OBG GTPase family. Monomer. The cofactor is Mg(2+).

It localises to the cytoplasm. An essential GTPase which binds GTP, GDP and possibly (p)ppGpp with moderate affinity, with high nucleotide exchange rates and a fairly low GTP hydrolysis rate. Plays a role in control of the cell cycle, stress response, ribosome biogenesis and in those bacteria that undergo differentiation, in morphogenesis control. This Listeria monocytogenes serotype 4a (strain HCC23) protein is GTPase Obg.